The chain runs to 920 residues: Chitin synthase C (920 aa).

Disordered regions lie at residues 1–41 (MSYN…NAYQ) and 140–173 (IPML…SPAP). Residues 154-163 (YSDEYQVEEQ) are compositionally biased toward acidic residues. 5 helical membrane-spanning segments follow: residues 466–486 (SAFG…FVAL), 564–584 (RWLN…YQIW), 608–628 (LFAW…TTYL), 640–660 (VLGV…FVLA), and 675–695 (MVYF…FVTV). An N-linked (GlcNAc...) asparagine glycan is attached at asparagine 715. Helical transmembrane passes span 718 to 738 (FFTI…ASII), 749 to 769 (FIQY…YAFC), 847 to 867 (AVVL…LSAA), and 892 to 912 (VVLW…LWYL).

This sequence belongs to the chitin synthase family. Class I subfamily.

It localises to the cell membrane. The enzyme catalyses [(1-&gt;4)-N-acetyl-beta-D-glucosaminyl](n) + UDP-N-acetyl-alpha-D-glucosamine = [(1-&gt;4)-N-acetyl-beta-D-glucosaminyl](n+1) + UDP + H(+). Its function is as follows. Polymerizes chitin, a structural polymer of the cell wall and septum, by transferring the sugar moiety of UDP-GlcNAc to the non-reducing end of the growing chitin polymer. Involved in hyphal growth. The polypeptide is Chitin synthase C (Aspergillus oryzae (strain ATCC 42149 / RIB 40) (Yellow koji mold)).